The sequence spans 406 residues: Fosmidomycin resistance protein (406 aa).

Over 1 to 42 (MAMSEQPQPVAGAAASTTKARTSFGILGAISLSHLLNDMIQS) the chain is Periplasmic. The next 2 helical transmembrane spans lie at 43-63 (LILAIYPLLQSEFSLTFMQIG) and 64-84 (MITLTFQLASSLLQPVVGYWT). Residues 85 to 102 (DKYPMPWSLPIGMCFTLS) lie on the Periplasmic side of the membrane. Residues 103–123 (GLVLLALAGSFGAVLLAAALV) form a helical membrane-spanning segment. Topologically, residues 124-151 (GTGSSVFHPESSRVARMASGGRHGLAQS) are cytoplasmic. The chain crosses the membrane as a helical span at residues 152-172 (IFQVGGNFGSSLGPLLAAVII). At 173 to 177 (APYGK) the chain is on the periplasmic side. Residues 178-198 (GNVAWFVLAALLAIVVLAQIS) form a helical membrane-spanning segment. The Cytoplasmic portion of the chain corresponds to 199–225 (RWYSAQHRMNKGKPKATIINPLPRNKV). A helical transmembrane segment spans residues 226 to 246 (VLAVSILLILIFSKYFYMASI). Over 247 to 266 (SSYYTFYLMQKFGLSIQNAQ) the chain is Periplasmic. A helical transmembrane segment spans residues 267-287 (LHLFAFLFAVAAGTVIGGPVG). The Cytoplasmic portion of the chain corresponds to 288-294 (DKIGRKY). The chain crosses the membrane as a helical span at residues 295 to 315 (VIWGSILGVAPFTLILPYASL). Residues 316 to 319 (HWTG) are Periplasmic-facing. The chain crosses the membrane as a helical span at residues 320 to 340 (VLTVIIGFILASAFSAILVYA). Over 341-353 (QELLPGRIGMVSG) the chain is Cytoplasmic. A helical membrane pass occupies residues 354 to 374 (LFFGFAFGMGGLGAAVLGLIA). Topologically, residues 375–378 (DHTS) are periplasmic. The chain crosses the membrane as a helical span at residues 379–399 (IELVYKICAFLPLLGMLTIFL). The Cytoplasmic segment spans residues 400-406 (PDNRHKD).

Belongs to the major facilitator superfamily.

The protein resides in the cell inner membrane. In terms of biological role, confers the resistance against fosmidomycin. In Escherichia coli (strain K12), this protein is Fosmidomycin resistance protein (fsr).